A 189-amino-acid polypeptide reads, in one-letter code: Xanthine phosphoribosyltransferase (189 aa).

Positions 20 and 27 each coordinate xanthine. 128–132 (ANGQA) provides a ligand contact to 5-phospho-alpha-D-ribose 1-diphosphate. Lys156 serves as a coordination point for xanthine.

The protein belongs to the purine/pyrimidine phosphoribosyltransferase family. Xpt subfamily. Homodimer.

The protein localises to the cytoplasm. The catalysed reaction is XMP + diphosphate = xanthine + 5-phospho-alpha-D-ribose 1-diphosphate. The protein operates within purine metabolism; XMP biosynthesis via salvage pathway; XMP from xanthine: step 1/1. Converts the preformed base xanthine, a product of nucleic acid breakdown, to xanthosine 5'-monophosphate (XMP), so it can be reused for RNA or DNA synthesis. The protein is Xanthine phosphoribosyltransferase of Leuconostoc mesenteroides subsp. mesenteroides (strain ATCC 8293 / DSM 20343 / BCRC 11652 / CCM 1803 / JCM 6124 / NCDO 523 / NBRC 100496 / NCIMB 8023 / NCTC 12954 / NRRL B-1118 / 37Y).